The sequence spans 399 residues: Acetate kinase (399 aa).

Asn-10 is a binding site for Mg(2+). Position 17 (Lys-17) interacts with ATP. Arg-91 contributes to the substrate binding site. Catalysis depends on Asp-148, which acts as the Proton donor/acceptor. Residues 208–212, 283–285, and 331–335 each bind ATP; these read HLGNG, DCR, and GIGEN. Residue Glu-385 coordinates Mg(2+).

Belongs to the acetokinase family. Homodimer. Mg(2+) serves as cofactor. It depends on Mn(2+) as a cofactor.

The protein localises to the cytoplasm. The enzyme catalyses acetate + ATP = acetyl phosphate + ADP. It functions in the pathway metabolic intermediate biosynthesis; acetyl-CoA biosynthesis; acetyl-CoA from acetate: step 1/2. Its function is as follows. Catalyzes the formation of acetyl phosphate from acetate and ATP. Can also catalyze the reverse reaction. This Shewanella oneidensis (strain ATCC 700550 / JCM 31522 / CIP 106686 / LMG 19005 / NCIMB 14063 / MR-1) protein is Acetate kinase.